We begin with the raw amino-acid sequence, 299 residues long: Tyrosine recombinase XerC (299 aa).

In terms of domain architecture, Core-binding (CB) spans 1–85 (MQNELDAYFE…SVRGLYRYLN (85 aa)). One can recognise a Tyr recombinase domain in the interval 106-285 (RLPRLLDTDR…DFQHLAKVYD (180 aa)). Catalysis depends on residues arginine 146, lysine 170, histidine 237, arginine 240, and histidine 263. The active-site O-(3'-phospho-DNA)-tyrosine intermediate is the tyrosine 272.

Belongs to the 'phage' integrase family. XerC subfamily. As to quaternary structure, forms a cyclic heterotetrameric complex composed of two molecules of XerC and two molecules of XerD.

Its subcellular location is the cytoplasm. Site-specific tyrosine recombinase, which acts by catalyzing the cutting and rejoining of the recombining DNA molecules. The XerC-XerD complex is essential to convert dimers of the bacterial chromosome into monomers to permit their segregation at cell division. It also contributes to the segregational stability of plasmids. The polypeptide is Tyrosine recombinase XerC (Stutzerimonas stutzeri (strain A1501) (Pseudomonas stutzeri)).